The primary structure comprises 608 residues: Elongation factor 4 (608 aa).

One can recognise a tr-type G domain in the interval 11 to 193; the sequence is KKIRNFSIIA…QIVEKVPEPS (183 aa). GTP-binding positions include 23–28 and 140–143; these read DHGKST and NKID.

It belongs to the TRAFAC class translation factor GTPase superfamily. Classic translation factor GTPase family. LepA subfamily.

The protein resides in the cell membrane. The catalysed reaction is GTP + H2O = GDP + phosphate + H(+). Functionally, required for accurate and efficient protein synthesis under certain stress conditions. May act as a fidelity factor of the translation reaction, by catalyzing a one-codon backward translocation of tRNAs on improperly translocated ribosomes. Back-translocation proceeds from a post-translocation (POST) complex to a pre-translocation (PRE) complex, thus giving elongation factor G a second chance to translocate the tRNAs correctly. Binds to ribosomes in a GTP-dependent manner. This is Elongation factor 4 from Listeria welshimeri serovar 6b (strain ATCC 35897 / DSM 20650 / CCUG 15529 / CIP 8149 / NCTC 11857 / SLCC 5334 / V8).